Consider the following 53-residue polypeptide: Metallocarboxypeptidase inhibitor (53 aa).

Intrachain disulfides connect C9–C23, C15–C51, and C27–C38. A53 provides a ligand contact to Zn(2+).

In terms of assembly, monomer. Interacts (via C-terminus) with human CPA4.

In terms of biological role, metallocarboxypeptidase inhibitor. Has an inhibitory effect on bovine CPA1 and CPB2, human CPA1, CPA2, CPA4, CPB1 and CPB2, and porcine CPB1. Does not inhibit D.melanogaster svr (carboxypeptidase D). Shows no activity against serine proteases subtilisin or bovine trypsin, cysteine protease papain, and aspartyl protease porcine pepsin. This chain is Metallocarboxypeptidase inhibitor, found in Nerita versicolor (Four-tooth nerite).